The primary structure comprises 224 residues: Putative cobalt transport protein CbiM (224 aa).

6 helical membrane passes run 8 to 28, 41 to 61, 75 to 95, 108 to 128, 138 to 158, and 169 to 189; these read LPPL…VYGI, AMPM…LKMP, FGAV…VLVF, LGAN…AVWL, EIAM…VTAI, and FFTA…PLAI.

It belongs to the CbiM family. In terms of assembly, forms an energy-coupling factor (ECF) transporter complex composed of an ATP-binding protein (A component, CbiO), a transmembrane protein (T component, CbiQ) and 2 possible substrate-capture proteins (S components, CbiM and CbiN) of unknown stoichimetry.

Its subcellular location is the cell membrane. It participates in cofactor biosynthesis; adenosylcobalamin biosynthesis. Its function is as follows. Part of the energy-coupling factor (ECF) transporter complex CbiMNOQ involved in cobalt import. The sequence is that of Putative cobalt transport protein CbiM from Methanosphaera stadtmanae (strain ATCC 43021 / DSM 3091 / JCM 11832 / MCB-3).